The sequence spans 282 residues: B3 domain-containing protein At5g25475 (282 aa).

A DNA-binding region (TF-B3) is located at residues 20 to 114 (WKSLSPGQTW…NLEVQIFKNN (95 aa)). A disordered region spans residues 127–178 (PETEPFHPTPKKPHKETTPASSFASGSGCSANGGTNGRGKQRSSDVKNPERY). The segment covering 144-159 (TPASSFASGSGCSANG) has biased composition (low complexity).

The protein localises to the nucleus. This is B3 domain-containing protein At5g25475 from Arabidopsis thaliana (Mouse-ear cress).